Reading from the N-terminus, the 332-residue chain is Ribosomal RNA small subunit methyltransferase C (332 aa).

It belongs to the methyltransferase superfamily. RsmC family. In terms of assembly, monomer.

Its subcellular location is the cytoplasm. It catalyses the reaction guanosine(1207) in 16S rRNA + S-adenosyl-L-methionine = N(2)-methylguanosine(1207) in 16S rRNA + S-adenosyl-L-homocysteine + H(+). Specifically methylates the guanine in position 1207 of 16S rRNA in the 30S particle. This chain is Ribosomal RNA small subunit methyltransferase C, found in Pseudomonas aeruginosa (strain UCBPP-PA14).